We begin with the raw amino-acid sequence, 96 residues long: Mapk-regulated corepressor-interacting protein 1 (96 aa).

Disordered regions lie at residues 1–28 (MASS…GSEI) and 76–96 (AFKP…AKKS). Positions 79–83 (PVDLS) match the PXDLS motif motif. A compositionally biased stretch (basic and acidic residues) spans 81 to 96 (DLSDLKRRNTQDAKKS).

It belongs to the MCRIP family.

It localises to the nucleus. The protein localises to the cytoplasm. Its subcellular location is the stress granule. May play a role in the regulation of the epithelial-mesenchymal transition. The protein is Mapk-regulated corepressor-interacting protein 1 (MCRIP1) of Gallus gallus (Chicken).